A 320-amino-acid polypeptide reads, in one-letter code: Cytochrome f (320 aa).

The first 35 residues, 1 to 35 (MENRKTFSWLKEQMIRSISVSIMIYVITRTSISNA), serve as a signal peptide directing secretion. Positions 36, 56, 59, and 60 each coordinate heme. The chain crosses the membrane as a helical span at residues 286 to 306 (VQGLLFFFASVILAQVFLVLK).

This sequence belongs to the cytochrome f family. As to quaternary structure, the 4 large subunits of the cytochrome b6-f complex are cytochrome b6, subunit IV (17 kDa polypeptide, petD), cytochrome f and the Rieske protein, while the 4 small subunits are PetG, PetL, PetM and PetN. The complex functions as a dimer. Heme serves as cofactor.

It localises to the plastid. The protein resides in the chloroplast thylakoid membrane. Functionally, component of the cytochrome b6-f complex, which mediates electron transfer between photosystem II (PSII) and photosystem I (PSI), cyclic electron flow around PSI, and state transitions. The chain is Cytochrome f from Saccharum hybrid (Sugarcane).